Consider the following 165-residue polypeptide: Selenoprotein F (165 aa).

A signal peptide spans 1 to 31 (MVAMAAGPSGCLVPAFGLRLLLATVLQAVSA). Position 96 (Sec96) is a non-standard amino acid, selenocysteine.

Forms a tight complex with UGGT1/UGCGL1. Interacts with UGGT2/UGCGL2. Interacts with RDH11. Post-translationally, the N-terminus is blocked. In terms of tissue distribution, higher levels in prostate and thyroid gland.

The protein resides in the endoplasmic reticulum lumen. Its function is as follows. May be involved in redox reactions associated with the formation of disulfide bonds. May contribute to the quality control of protein folding in the endoplasmic reticulum. May regulate protein folding by enhancing the catalytic activity of UGGT1/UGCGL1 and UGGT2/UGCGL2. This chain is Selenoprotein F, found in Homo sapiens (Human).